Consider the following 55-residue polypeptide: DNA-directed RNA polymerase subunit Rpo10 (55 aa).

Zn(2+)-binding residues include Cys6, Cys9, Cys43, and Cys44.

Belongs to the archaeal Rpo10/eukaryotic RPB10 RNA polymerase subunit family. In terms of assembly, part of the RNA polymerase complex. Zn(2+) is required as a cofactor.

The protein resides in the cytoplasm. The enzyme catalyses RNA(n) + a ribonucleoside 5'-triphosphate = RNA(n+1) + diphosphate. Its function is as follows. DNA-dependent RNA polymerase (RNAP) catalyzes the transcription of DNA into RNA using the four ribonucleoside triphosphates as substrates. The chain is DNA-directed RNA polymerase subunit Rpo10 from Methanothermobacter thermautotrophicus (strain ATCC 29096 / DSM 1053 / JCM 10044 / NBRC 100330 / Delta H) (Methanobacterium thermoautotrophicum).